Reading from the N-terminus, the 150-residue chain is Depactin (150 aa).

One can recognise an ADF-H domain in the interval 3–148; the sequence is SGTALDENVK…SEEAIGDKIK (146 aa).

It belongs to the actin-binding proteins ADF family.

Depactin interacts with actin at some of its 12 N-terminal residues and 20 C-terminal residues. Binds to actin monomers from filaments and in solution. The sequence is that of Depactin from Asterias amurensis (Northern Pacific seastar).